A 268-amino-acid polypeptide reads, in one-letter code: MARFLRLCTWLLALGSCLLATVQAECSQDCAKCSYRLVRPGDINFLACTLECEGQLPSFKIWETCKDLLQVSRPEFPWDNIDMYKDSSKQDESHLLAKKYGGFMKRYGGFMKKMDELYPMEPEEEANGGEILAKRYGGFMKKDADEGDTLANSSDLLKELLGTGDNRAKDSHQQESTNNDEDMSKRYGGFMRSLKRSPQLEDEAKELQKRYGGFMRRVGRPEWWMDYQKRYGGFLKRFAESLPSDEEGENYSKEVPEIEKRYGGFMRF.

The first 24 residues, 1 to 24, serve as a signal peptide directing secretion; it reads MARFLRLCTWLLALGSCLLATVQA. 3 disulfides stabilise this stretch: cysteine 26-cysteine 48, cysteine 30-cysteine 52, and cysteine 33-cysteine 65. The interval 163–184 is disordered; it reads TGDNRAKDSHQQESTNNDEDMS. 2 consecutive propeptides follow at residues 197 to 208 and 218 to 228; these read SPQLEDEAKELQ and VGRPEWWMDYQ. Serine 252 carries the post-translational modification Phosphoserine.

Belongs to the opioid neuropeptide precursor family. In terms of processing, proenkephalin-A is cleaved by CTSL to generate Met-enkephalin. Processed and degraded by ACE. Post-translationally, probably cleaved by ACE. In terms of processing, processed by ACE to generate Met-enkephalin in the nucleus accumbens of the brain. The N-terminal domain contains 6 conserved cysteines thought to be involved in disulfide bonding and/or processing. In terms of tissue distribution, spermatogenic and somatic cells.

The protein localises to the cytoplasmic vesicle. The protein resides in the secretory vesicle. It is found in the chromaffin granule lumen. It localises to the secreted. In terms of biological role, neuropeptide that competes with and mimic the effects of opiate drugs. They play a role in a number of physiologic functions, including pain perception and responses to stress. Functionally, met-enkephalin-Arg-Phe neuropeptide acts as a strong ligand of Mu-type opioid receptor OPRM1. Met-enkephalin-Arg-Phe-binding to OPRM1 in the nucleus accumbens of the brain increases activation of OPRM1, leading to long-term synaptic depression of glutamate release. Increases glutamate release in the striatum and decreases GABA concentration in the striatum. Its function is as follows. Increases glutamate release in the striatum. This chain is Proenkephalin-A (Penk), found in Mus musculus (Mouse).